Here is a 304-residue protein sequence, read N- to C-terminus: Protease HtpX homolog (304 aa).

The next 2 membrane-spanning stretches (helical) occupy residues 14-34 (IFII…IGII) and 39-59 (YLNG…IMVM). His-144 contacts Zn(2+). Glu-145 is an active-site residue. His-148 lines the Zn(2+) pocket. 2 helical membrane passes run 159-179 (IAIA…RMIF) and 202-222 (AIIY…ATAI). Glu-231 serves as a coordination point for Zn(2+).

Belongs to the peptidase M48B family. Zn(2+) is required as a cofactor.

It localises to the cell membrane. The chain is Protease HtpX homolog from Listeria monocytogenes serovar 1/2a (strain ATCC BAA-679 / EGD-e).